The chain runs to 140 residues: Large ribosomal subunit protein uL14 (140 aa).

This sequence belongs to the universal ribosomal protein uL14 family.

This is Large ribosomal subunit protein uL14 (RPL23) from Brugia malayi (Filarial nematode worm).